Reading from the N-terminus, the 270-residue chain is Sec-independent protein translocase protein TatC (270 aa).

6 helical membrane passes run 35 to 55, 93 to 113, 124 to 144, 176 to 196, 209 to 229, and 231 to 251; these read LILS…YRVQ, AFWA…WAFI, WGLP…VFGY, VVTF…AVIL, QGWR…TPTP, and PANM…GVVL.

It belongs to the TatC family. Forms a complex with TatA.

Its subcellular location is the cell membrane. Its function is as follows. Part of the twin-arginine translocation (Tat) system that transports large folded proteins containing a characteristic twin-arginine motif in their signal peptide across membranes. The polypeptide is Sec-independent protein translocase protein TatC (Deinococcus radiodurans (strain ATCC 13939 / DSM 20539 / JCM 16871 / CCUG 27074 / LMG 4051 / NBRC 15346 / NCIMB 9279 / VKM B-1422 / R1)).